Consider the following 100-residue polypeptide: Ubiquitin-related modifier 1 homolog (100 aa).

A 1-thioglycine modification is found at Gly-100. A Glycyl lysine isopeptide (Gly-Lys) (interchain with K-? in acceptor proteins) cross-link involves residue Gly-100.

The protein belongs to the URM1 family. As to quaternary structure, interacts with cer. C-terminal thiocarboxylation occurs in 2 steps, it is first acyl-adenylated (-COAMP) via the hesA/moeB/thiF part of the MOCS3 homolog, then thiocarboxylated (-COSH) via the rhodanese domain of the MOCS3 homolog.

It is found in the cytoplasm. Its pathway is tRNA modification; 5-methoxycarbonylmethyl-2-thiouridine-tRNA biosynthesis. In terms of biological role, acts as a sulfur carrier required for 2-thiolation of mcm(5)S(2)U at tRNA wobble positions of cytosolic tRNA(Lys), tRNA(Glu) and tRNA(Gln). Serves as sulfur donor in tRNA 2-thiolation reaction by being thiocarboxylated (-COSH) at its C-terminus by MOCS3. The sulfur is then transferred to tRNA to form 2-thiolation of mcm(5)S(2)U. Also acts as a ubiquitin-like protein (UBL) that is covalently conjugated via an isopeptide bond to lysine residues of target proteins such as Prx2/Jafrac1, Ciao1, Eip71CD and GILT1. The thiocarboxylated form serves as substrate for conjugation and oxidative stress specifically induces the formation of UBL-protein conjugates. This is Ubiquitin-related modifier 1 homolog from Drosophila willistoni (Fruit fly).